The chain runs to 197 residues: Putative peptidyl-prolyl cis-trans isomerase (197 aa).

In terms of domain architecture, PPIase cyclophilin-type spans 14-195; the sequence is GEIKVVMHTN…HDVVIESIDV (182 aa).

This sequence belongs to the cyclophilin-type PPIase family.

It carries out the reaction [protein]-peptidylproline (omega=180) = [protein]-peptidylproline (omega=0). In terms of biological role, PPIases accelerate the folding of proteins. It catalyzes the cis-trans isomerization of proline imidic peptide bonds in oligopeptides. This Staphylococcus aureus (strain bovine RF122 / ET3-1) protein is Putative peptidyl-prolyl cis-trans isomerase.